The sequence spans 255 residues: MPEGDTVWHTAATLRRHLAGRTLTRCDIRVPRFAAVDLTGEVVDEVISRGKHLFIRTGTASIHSHLQMDGSWRVGNRPVRVDHRARIILEANQQEQAIRVVGVDLGLLEVIDRHNDGAVVAHLGPDLLADDWDPQRAAANLIVAPDRPIAEALLDQRVLAGIGNVYCNELCFVSGVLPTAPVSAVADPRRLVTRARDMLWVNRFRWNRCTTGDTRAGRRLWVYGRAGQGCRRCGTLIAYDTTDERVRYWCPACQR.

Catalysis depends on P2, which acts as the Schiff-base intermediate with DNA. E3 acts as the Proton donor in catalysis. Catalysis depends on K51, which acts as the Proton donor; for beta-elimination activity. Positions 67 and 164 each coordinate DNA. The FPG-type zinc-finger motif lies at 221-255; that stretch reads WVYGRAGQGCRRCGTLIAYDTTDERVRYWCPACQR. R245 serves as the catalytic Proton donor; for delta-elimination activity.

Belongs to the FPG family. Requires Zn(2+) as cofactor.

It carries out the reaction 2'-deoxyribonucleotide-(2'-deoxyribose 5'-phosphate)-2'-deoxyribonucleotide-DNA = a 3'-end 2'-deoxyribonucleotide-(2,3-dehydro-2,3-deoxyribose 5'-phosphate)-DNA + a 5'-end 5'-phospho-2'-deoxyribonucleoside-DNA + H(+). In terms of biological role, involved in base excision repair of DNA damaged by oxidation or by mutagenic agents. Acts as a DNA glycosylase that recognizes and removes damaged bases. Has AP (apurinic/apyrimidinic) lyase activity and introduces nicks in the DNA strand. Cleaves the DNA backbone by beta-delta elimination to generate a single-strand break at the site of the removed base with both 3'- and 5'-phosphates. The chain is Endonuclease 8 2 (nei2) from Mycobacterium bovis (strain ATCC BAA-935 / AF2122/97).